The sequence spans 445 residues: Deoxyribodipyrimidine photo-lyase (445 aa).

The 129-residue stretch at 20–148 (SYVVYWMQAS…QVESNVIVPV (129 aa)) folds into the Photolyase/cryptochrome alpha/beta domain. Arg-239 lines the DNA pocket.

The protein belongs to the DNA photolyase class-2 family. It depends on FAD as a cofactor. Requires coenzyme F420-(gamma-Glu)n as cofactor.

It carries out the reaction cyclobutadipyrimidine (in DNA) = 2 pyrimidine residues (in DNA).. Its function is as follows. Involved in repair of UV radiation-induced DNA damage. Catalyzes the light-dependent monomerization (300-600 nm) of cyclobutyl pyrimidine dimers (in cis-syn configuration), which are formed between adjacent bases on the same DNA strand upon exposure to ultraviolet radiation. This Methanothermobacter thermautotrophicus (strain ATCC 29096 / DSM 1053 / JCM 10044 / NBRC 100330 / Delta H) (Methanobacterium thermoautotrophicum) protein is Deoxyribodipyrimidine photo-lyase (phr).